A 519-amino-acid polypeptide reads, in one-letter code: Ribonuclease Y (519 aa).

Residues 3-23 form a helical membrane-spanning segment; it reads LIEIVLLLVGMAVGAATGFIL. Residues 209–272 enclose the KH domain; the sequence is TVTAVSLPSE…QIAKMALERL (64 aa). One can recognise an HD domain in the interval 335–428; sequence VLQHSMEVAS…VQAADSLSGA (94 aa).

The protein belongs to the RNase Y family.

Its subcellular location is the cell membrane. Its function is as follows. Endoribonuclease that initiates mRNA decay. The chain is Ribonuclease Y from Oleidesulfovibrio alaskensis (strain ATCC BAA-1058 / DSM 17464 / G20) (Desulfovibrio alaskensis).